We begin with the raw amino-acid sequence, 156 residues long: 6,7-dimethyl-8-ribityllumazine synthase (156 aa).

5-amino-6-(D-ribitylamino)uracil is bound by residues F22, 57 to 59 (AYE), and 81 to 83 (SVI). 86–87 (GT) contacts (2S)-2-hydroxy-3-oxobutyl phosphate. The Proton donor role is filled by H89. F114 provides a ligand contact to 5-amino-6-(D-ribitylamino)uracil. (2S)-2-hydroxy-3-oxobutyl phosphate is bound at residue R128.

Belongs to the DMRL synthase family. In terms of assembly, forms an icosahedral capsid composed of 60 subunits, arranged as a dodecamer of pentamers.

The catalysed reaction is (2S)-2-hydroxy-3-oxobutyl phosphate + 5-amino-6-(D-ribitylamino)uracil = 6,7-dimethyl-8-(1-D-ribityl)lumazine + phosphate + 2 H2O + H(+). Its pathway is cofactor biosynthesis; riboflavin biosynthesis; riboflavin from 2-hydroxy-3-oxobutyl phosphate and 5-amino-6-(D-ribitylamino)uracil: step 1/2. Functionally, catalyzes the formation of 6,7-dimethyl-8-ribityllumazine by condensation of 5-amino-6-(D-ribitylamino)uracil with 3,4-dihydroxy-2-butanone 4-phosphate. This is the penultimate step in the biosynthesis of riboflavin. This chain is 6,7-dimethyl-8-ribityllumazine synthase, found in Photobacterium profundum (strain SS9).